Consider the following 203-residue polypeptide: Dephospho-CoA kinase (203 aa).

The region spanning 5–203 is the DPCK domain; sequence IVGLTGGIAS…VVYRVAASEH (199 aa). Residue 13–18 coordinates ATP; sequence ASGKSA.

This sequence belongs to the CoaE family.

The protein resides in the cytoplasm. It catalyses the reaction 3'-dephospho-CoA + ATP = ADP + CoA + H(+). Its pathway is cofactor biosynthesis; coenzyme A biosynthesis; CoA from (R)-pantothenate: step 5/5. In terms of biological role, catalyzes the phosphorylation of the 3'-hydroxyl group of dephosphocoenzyme A to form coenzyme A. In Xanthomonas euvesicatoria pv. vesicatoria (strain 85-10) (Xanthomonas campestris pv. vesicatoria), this protein is Dephospho-CoA kinase.